A 442-amino-acid chain; its full sequence is 26S proteasome regulatory subunit 6A (442 aa).

Ser12 carries the post-translational modification Phosphoserine. 230–237 (GPPGTGKT) is a binding site for ATP. The residue at position 379 (Ser379) is a Phosphoserine.

This sequence belongs to the AAA ATPase family. In terms of assembly, component of the 19S proteasome regulatory particle complex. The 26S proteasome consists of a 20S core particle (CP) and two 19S regulatory subunits (RP). The regulatory particle is made of a lid composed of 9 subunits, a base containing 6 ATPases including PSMC3 and few additional components. Interacts with PAAF1.

It is found in the cytoplasm. The protein resides in the nucleus. Functionally, component of the 26S proteasome, a multiprotein complex involved in the ATP-dependent degradation of ubiquitinated proteins. This complex plays a key role in the maintenance of protein homeostasis by removing misfolded or damaged proteins, which could impair cellular functions, and by removing proteins whose functions are no longer required. Therefore, the proteasome participates in numerous cellular processes, including cell cycle progression, apoptosis, or DNA damage repair. PSMC3 belongs to the heterohexameric ring of AAA (ATPases associated with diverse cellular activities) proteins that unfolds ubiquitinated target proteins that are concurrently translocated into a proteolytic chamber and degraded into peptides. The polypeptide is 26S proteasome regulatory subunit 6A (Psmc3) (Mus musculus (Mouse)).